The following is a 508-amino-acid chain: Ribonuclease Y (508 aa).

The helical transmembrane segment at 1–21 threads the bilayer; that stretch reads MMLWYIVAGAGGLLIGYLIAN. Residues 198–283 form the KH domain; that stretch reads TVSTVSLPSD…EMYEKAKQEV (86 aa). The HD domain maps to 324–417; the sequence is VLNHSIEVAL…VAAADALSAA (94 aa).

Belongs to the RNase Y family.

It localises to the cell membrane. Functionally, endoribonuclease that initiates mRNA decay. This is Ribonuclease Y from Thermotoga maritima (strain ATCC 43589 / DSM 3109 / JCM 10099 / NBRC 100826 / MSB8).